The sequence spans 273 residues: Endoplasmic reticulum resident protein 27 (273 aa).

An N-terminal signal peptide occupies residues methionine 1 to alanine 25. The Thioredoxin domain maps to glutamate 39 to valine 152. A glycan (N-linked (GlcNAc...) asparagine) is linked at asparagine 100. Residues aspartate 230–aspartate 233 form a PDIA3-binding site region. The Prevents secretion from ER signature appears at lysine 270 to leucine 273.

It belongs to the protein disulfide isomerase family. Interacts with PDIA3.

The protein resides in the endoplasmic reticulum lumen. Functionally, specifically binds unfolded proteins and may recruit protein disulfide isomerase PDIA3 to unfolded substrates. Binds protein substrates via a hydrophobic pocket in the C-terminal domain. May play a role in the unfolded stress response. The polypeptide is Endoplasmic reticulum resident protein 27 (ERP27) (Homo sapiens (Human)).